Reading from the N-terminus, the 161-residue chain is Endoribonuclease YbeY (161 aa).

Positions 127, 131, and 137 each coordinate Zn(2+).

The protein belongs to the endoribonuclease YbeY family. It depends on Zn(2+) as a cofactor.

It is found in the cytoplasm. Single strand-specific metallo-endoribonuclease involved in late-stage 70S ribosome quality control and in maturation of the 3' terminus of the 16S rRNA. This Listeria monocytogenes serotype 4a (strain HCC23) protein is Endoribonuclease YbeY.